A 108-amino-acid chain; its full sequence is uncharacterized protein (108 aa).

This is an uncharacterized protein from Rickettsia prowazekii (strain Madrid E).